The primary structure comprises 348 residues: Protein RecA (348 aa).

ATP is bound at residue 64–71 (GPESSGKT). The span at 325–335 (YEIDGANKEPL) shows a compositional bias: basic and acidic residues. The tract at residues 325–348 (YEIDGANKEPLEETEETLSLLDDE) is disordered. Residues 336–348 (EETEETLSLLDDE) show a composition bias toward acidic residues.

Belongs to the RecA family.

It is found in the cytoplasm. Can catalyze the hydrolysis of ATP in the presence of single-stranded DNA, the ATP-dependent uptake of single-stranded DNA by duplex DNA, and the ATP-dependent hybridization of homologous single-stranded DNAs. It interacts with LexA causing its activation and leading to its autocatalytic cleavage. The polypeptide is Protein RecA (Listeria welshimeri serovar 6b (strain ATCC 35897 / DSM 20650 / CCUG 15529 / CIP 8149 / NCTC 11857 / SLCC 5334 / V8)).